We begin with the raw amino-acid sequence, 99 residues long: Ferredoxin (99 aa).

Positions 4-96 constitute a 2Fe-2S ferredoxin-type domain; the sequence is YKIHLLCEEE…DCTISTHVEQ (93 aa). Residues Cys-42, Cys-47, Cys-50, and Cys-80 each contribute to the [2Fe-2S] cluster site.

It belongs to the 2Fe2S plant-type ferredoxin family. As to quaternary structure, forms a complex with heterodimeric ferredoxin-thioredoxin reductase (FTR) and thioredoxin. Requires [2Fe-2S] cluster as cofactor.

The protein localises to the plastid. Its subcellular location is the chloroplast. Its function is as follows. Ferredoxins are iron-sulfur proteins that transfer electrons in a wide variety of metabolic reactions. In Pyropia yezoensis (Susabi-nori), this protein is Ferredoxin (petF).